The primary structure comprises 306 residues: Agmatinase (306 aa).

Positions 126, 149, 151, 153, 230, and 232 each coordinate Mn(2+).

Belongs to the arginase family. Agmatinase subfamily. Requires Mn(2+) as cofactor.

The catalysed reaction is agmatine + H2O = urea + putrescine. It functions in the pathway amine and polyamine biosynthesis; putrescine biosynthesis via agmatine pathway; putrescine from agmatine: step 1/1. In terms of biological role, catalyzes the formation of putrescine from agmatine. This chain is Agmatinase, found in Cronobacter sakazakii (strain ATCC BAA-894) (Enterobacter sakazakii).